The sequence spans 399 residues: Tryptophan synthase beta chain (399 aa).

Lysine 92 carries the N6-(pyridoxal phosphate)lysine modification.

The protein belongs to the TrpB family. In terms of assembly, tetramer of two alpha and two beta chains. Requires pyridoxal 5'-phosphate as cofactor.

It carries out the reaction (1S,2R)-1-C-(indol-3-yl)glycerol 3-phosphate + L-serine = D-glyceraldehyde 3-phosphate + L-tryptophan + H2O. It functions in the pathway amino-acid biosynthesis; L-tryptophan biosynthesis; L-tryptophan from chorismate: step 5/5. The beta subunit is responsible for the synthesis of L-tryptophan from indole and L-serine. In Nitrosomonas eutropha (strain DSM 101675 / C91 / Nm57), this protein is Tryptophan synthase beta chain.